Reading from the N-terminus, the 274-residue chain is MTTSTGDDRIDQLQQAITKSRRYQTVAPATVRRLARAALVASRGDVPDAVKRTKRGLHEIYGAFLPPSAPNYTALLRHLDSAVEAGDDEAVVRWDRRAMSVHMSTRERVPHLDEFYREIFRHVPRPNTLRDLACGLNPLAVPWMGLSDETVYVASDIDARLMDFVGAALTRLGVAHRTSVVDLLEARLDEPADVTLLLKTLPCLETQQRGSGWEVIDIVNSPIIVVTFPTKSLGQRSKGMFQNYSQSFESQASERSCRIQRLEIGNELIYVIHK.

S-adenosyl-L-methionine-binding positions include phenylalanine 64, 102-104, arginine 108, alanine 133, aspartate 156, 182-183, leucine 198, and glutamine 207; these read HMS and DL.

Belongs to the methyltransferase superfamily. Aminoglycoside resistance family.

The catalysed reaction is guanosine(1405) in 16S rRNA + S-adenosyl-L-methionine = N(7)-methylguanosine(1405) in 16S rRNA + S-adenosyl-L-homocysteine. Functionally, specifically methylates the N(7) position of guanine 1405 in 16S rRNA. Confers resistance to aminoglycosides. This chain is 16S rRNA (guanine(1405)-N(7))-methyltransferase (grm), found in Micromonospora rosea.